A 636-amino-acid chain; its full sequence is Bifunctional phosphonoacetaldehyde hydrolase/aminoethylphosphonate transaminase (636 aa).

A phosphonoacetaldehyde hydrolase region spans residues 1 to 276 (MKKIYGEKIK…IKSDFVPEND (276 aa)). Asp15 (nucleophile) is an active-site residue. Residues Asp15 and Ala17 each coordinate Mg(2+). The active-site Schiff-base intermediate with substrate is the Lys56. Position 189 (Asp189) interacts with Mg(2+). Residues 277–636 (YILLTPGPLS…ADVIEKFINR (360 aa)) are 2-aminoethylphosphonate--pyruvate transaminase. Residue Lys465 is modified to N6-(pyridoxal phosphate)lysine.

In the N-terminal section; belongs to the HAD-like hydrolase superfamily. PhnX family. This sequence in the C-terminal section; belongs to the class-V pyridoxal-phosphate-dependent aminotransferase family. PhnW subfamily. Homodimer. Mg(2+) serves as cofactor. It depends on pyridoxal 5'-phosphate as a cofactor.

The enzyme catalyses (2-aminoethyl)phosphonate + pyruvate = phosphonoacetaldehyde + L-alanine. The catalysed reaction is phosphonoacetaldehyde + H2O = acetaldehyde + phosphate + H(+). Functionally, involved in phosphonate degradation. This chain is Bifunctional phosphonoacetaldehyde hydrolase/aminoethylphosphonate transaminase (phnXW), found in Clostridioides difficile (strain 630) (Peptoclostridium difficile).